The sequence spans 279 residues: S-methyl-5'-thioadenosine phosphorylase (279 aa).

Residues Ser-13, 55–56 (RH), and 88–89 (TA) each bind phosphate. Met-191 lines the substrate pocket. A phosphate-binding site is contributed by Thr-192. 215-217 (DYD) is a substrate binding site.

Belongs to the PNP/MTAP phosphorylase family. MTAP subfamily. In terms of assembly, homotrimer.

It localises to the cytoplasm. Its subcellular location is the nucleus. The catalysed reaction is S-methyl-5'-thioadenosine + phosphate = 5-(methylsulfanyl)-alpha-D-ribose 1-phosphate + adenine. It functions in the pathway amino-acid biosynthesis; L-methionine biosynthesis via salvage pathway; S-methyl-5-thio-alpha-D-ribose 1-phosphate from S-methyl-5'-thioadenosine (phosphorylase route): step 1/1. Its function is as follows. Catalyzes the reversible phosphorylation of S-methyl-5'-thioadenosine (MTA) to adenine and 5-methylthioribose-1-phosphate. Involved in the breakdown of MTA, a major by-product of polyamine biosynthesis. Responsible for the first step in the methionine salvage pathway after MTA has been generated from S-adenosylmethionine. Has broad substrate specificity with 6-aminopurine nucleosides as preferred substrates. This is S-methyl-5'-thioadenosine phosphorylase from Aedes aegypti (Yellowfever mosquito).